A 352-amino-acid polypeptide reads, in one-letter code: Ion-translocating oxidoreductase complex subunit D (352 aa).

The next 4 helical transmembrane spans lie at 20–40, 42–62, 89–109, and 123–143; these read IMLL…WFFG, GTLV…ALVL, IPPL…VIIA, and PAMI…TSWL. T187 is modified (FMN phosphoryl threonine). A run of 5 helical transmembrane segments spans residues 214–234, 242–262, 267–287, 301–321, and 322–342; these read ILAG…GVWL, WHIP…GWLF, LAAP…FFIL, LIFG…GGYP, and DGVA…DYYT.

The protein belongs to the NqrB/RnfD family. In terms of assembly, the complex is composed of six subunits: RsxA, RsxB, RsxC, RsxD, RsxE and RsxG. Requires FMN as cofactor.

It localises to the cell inner membrane. Functionally, part of a membrane-bound complex that couples electron transfer with translocation of ions across the membrane. Required to maintain the reduced state of SoxR. This is Ion-translocating oxidoreductase complex subunit D from Escherichia coli O81 (strain ED1a).